Here is a 321-residue protein sequence, read N- to C-terminus: Mitochondrial thiamine pyrophosphate carrier 1 (321 aa).

6 consecutive transmembrane segments (helical) span residues 12–28 (GTRRQVVLAGGIAGLVS), 91–107 (LMYVCYGVIQFSAYRTT), 126–146 (FVAGATAGGLATASTYPLDLL), 184–200 (AAVGQIVPYMGLFFATY), 221–237 (AAGVIASVSSKTVMFPL), and 284–301 (GLTVSLFKAAPASAVTMW). Solcar repeat units lie at residues 12–110 (GTRR…TTQA), 120–206 (PPSA…LRPP), and 214–309 (PFGS…SLRL).

This sequence belongs to the mitochondrial carrier (TC 2.A.29) family.

The protein localises to the mitochondrion inner membrane. Functionally, mitochondrial transporter that mediates uptake of thiamine pyrophosphate (ThPP) into mitochondria. In Aspergillus niger (strain ATCC MYA-4892 / CBS 513.88 / FGSC A1513), this protein is Mitochondrial thiamine pyrophosphate carrier 1 (tpc1).